Consider the following 712-residue polypeptide: Cyclomaltodextrin glucanotransferase (712 aa).

The N-terminal stretch at methionine 1–alanine 27 is a signal peptide. The A1 stretch occupies residues alanine 28–proline 165. The Ca(2+) site is built by aspartate 54, asparagine 56, asparagine 59, and asparagine 60. Cysteines 70 and 77 form a disulfide. Ca(2+) contacts are provided by glycine 78 and aspartate 80. Tyrosine 127 to tryptophan 128 contributes to the substrate binding site. Ca(2+) is bound at residue asparagine 166. The b stretch occupies residues asparagine 166–histidine 229. Residue histidine 167 participates in substrate binding. Isoleucine 217 contacts Ca(2+). Asparagine 220–aspartate 223 is a binding site for substrate. Ca(2+) is bound at residue aspartate 226. Residues asparagine 230–tyrosine 433 are A2. Arginine 254 provides a ligand contact to substrate. Catalysis depends on aspartate 256, which acts as the Nucleophile. Position 259-260 (lysine 259–histidine 260) interacts with substrate. Histidine 260 is a binding site for Ca(2+). Catalysis depends on glutamate 284, which acts as the Proton donor. Substrate contacts are provided by histidine 354, aspartate 398, and arginine 402. The tract at residues glycine 434 to aspartate 522 is c. Residues alanine 523–leucine 608 form a d region. An IPT/TIG domain is found at proline 526–glutamate 606. A CBM20 domain is found at valine 607–proline 712. Positions threonine 609 to proline 712 are e.

It belongs to the glycosyl hydrolase 13 family. In terms of assembly, monomer. It depends on Ca(2+) as a cofactor.

The protein resides in the secreted. The catalysed reaction is Cyclizes part of a (1-&gt;4)-alpha-D-glucan chain by formation of a (1-&gt;4)-alpha-D-glucosidic bond.. This is Cyclomaltodextrin glucanotransferase (cgt) from Bacillus sp. (strain 38-2).